The following is a 161-amino-acid chain: uncharacterized protein (161 aa).

The first 35 residues, 1–35 (MVMAMGFDTVVAAIMATAIIVAVAYTFLAGSTSIA), serve as a signal peptide directing secretion.

This is an uncharacterized protein from Archaeoglobus fulgidus (strain ATCC 49558 / DSM 4304 / JCM 9628 / NBRC 100126 / VC-16).